We begin with the raw amino-acid sequence, 220 residues long: 7-carboxy-7-deazaguanine synthase (220 aa).

Residues 16–18 (IQG) and Arg-31 each bind substrate. The Radical SAM core domain maps to 22 to 215 (FAGWPCAFVR…LQLHKYIWNP (194 aa)). [4Fe-4S] cluster contacts are provided by Cys-35, Cys-39, and Cys-42. Thr-44 lines the Mg(2+) pocket. Thr-74 contacts substrate. Residue Gly-76 participates in S-adenosyl-L-methionine binding.

This sequence belongs to the radical SAM superfamily. 7-carboxy-7-deazaguanine synthase family. Homodimer. [4Fe-4S] cluster is required as a cofactor. It depends on S-adenosyl-L-methionine as a cofactor. Mg(2+) serves as cofactor.

It carries out the reaction 6-carboxy-5,6,7,8-tetrahydropterin + H(+) = 7-carboxy-7-deazaguanine + NH4(+). Its pathway is purine metabolism; 7-cyano-7-deazaguanine biosynthesis. Functionally, catalyzes the complex heterocyclic radical-mediated conversion of 6-carboxy-5,6,7,8-tetrahydropterin (CPH4) to 7-carboxy-7-deazaguanine (CDG), a step common to the biosynthetic pathways of all 7-deazapurine-containing compounds. This chain is 7-carboxy-7-deazaguanine synthase, found in Chlorobaculum tepidum (strain ATCC 49652 / DSM 12025 / NBRC 103806 / TLS) (Chlorobium tepidum).